The chain runs to 476 residues: Proton-coupled amino acid transporter 1 (476 aa).

Positions 1-15 are enriched in basic and acidic residues; that stretch reads MSTQRLRNEDYHDYS. The disordered stretch occupies residues 1 to 32; it reads MSTQRLRNEDYHDYSSTDVSPEESPSEGLNNL. The Cytoplasmic segment spans residues 1–51; sequence MSTQRLRNEDYHDYSSTDVSPEESPSEGLNNLSSPGSYQRFGQSNSTTWFQ. Residues 52-72 form a helical membrane-spanning segment; it reads TLIHLLKGNIGTGLLGLPLAV. Over 73-78 the chain is Extracellular; it reads KNAGIV. A helical transmembrane segment spans residues 79–99; the sequence is MGPISLLIIGIVAVHCMGILV. Residues 100-141 are Cytoplasmic-facing; the sequence is KCAHHFCRRLNKSFVDYGDTVMYGLESSPCSWLRNHAHWGRR. The helical transmembrane segment at 142–162 threads the bilayer; that stretch reads VVDFFLIVTQLGFCCVYFVFL. Residues 163-190 lie on the Extracellular side of the membrane; it reads ADNFKQVIEAANGTTNNCHNNETVILTP. N-linked (GlcNAc...) asparagine glycosylation is found at Asn-174 and Asn-183. Cys-180 and Cys-329 are oxidised to a cystine. Residues 191 to 211 traverse the membrane as a helical segment; that stretch reads TMDSRLYMLSFLPFLVLLVFI. The Cytoplasmic segment spans residues 212–215; the sequence is RNLR. The chain crosses the membrane as a helical span at residues 216 to 236; the sequence is ALSIFSLLANITMLVSLVMIY. At 237-257 the chain is on the extracellular side; sequence QFIVQRIPDPSHLPLVAPWKT. Residues 258–278 traverse the membrane as a helical segment; sequence YPLFFGTAIFSFEGIGMVLPL. Residues 279 to 289 are Cytoplasmic-facing; sequence ENKMKDPRKFP. The helical transmembrane segment at 290 to 310 threads the bilayer; sequence LILYLGMVIVTILYISLGCLG. Residues 311-342 lie on the Extracellular side of the membrane; sequence YLQFGANIQGSITLNLPNCWLYQSVKLLYSIG. A helical transmembrane segment spans residues 343-363; that stretch reads IFFTYALQFYVPAEIIIPFFV. The Cytoplasmic segment spans residues 364–372; it reads SRAPEHCEL. A helical membrane pass occupies residues 373–393; it reads VVDLFVRTVLVCLTCILAILI. Residues 394-397 lie on the Extracellular side of the membrane; sequence PRLD. A helical transmembrane segment spans residues 398–418; sequence LVISLVGSVSSSALALIIPPL. The Cytoplasmic segment spans residues 419 to 439; the sequence is LEVTTFYSEGMSPLTIFKDAL. Residues 440-460 traverse the membrane as a helical segment; that stretch reads ISILGFVGFVVGTYEALYELI. Residues 461-476 are Extracellular-facing; sequence QPSNAPIFINSTCAFI. Asn-470 carries N-linked (GlcNAc...) asparagine glycosylation.

This sequence belongs to the amino acid/polyamine transporter 2 family.

Its subcellular location is the cell membrane. It localises to the apical cell membrane. It is found in the lysosome membrane. It carries out the reaction glycine(in) + H(+)(in) = glycine(out) + H(+)(out). The catalysed reaction is L-alanine(in) + H(+)(in) = L-alanine(out) + H(+)(out). The enzyme catalyses D-alanine(in) + H(+)(in) = D-alanine(out) + H(+)(out). It catalyses the reaction L-proline(out) + H(+)(out) = L-proline(in) + H(+)(in). It carries out the reaction D-proline(out) + H(+)(out) = D-proline(in) + H(+)(in). The catalysed reaction is D-serine(out) + H(+)(out) = D-serine(in) + H(+)(in). The enzyme catalyses L-serine(in) + H(+)(in) = L-serine(out) + H(+)(out). It catalyses the reaction 4-aminobutanoate(in) + H(+)(in) = 4-aminobutanoate(out) + H(+)(out). It carries out the reaction beta-alanine(in) + H(+)(in) = beta-alanine(out) + H(+)(out). In terms of biological role, electrogenic proton/amino acid symporter with selectivity for small apolar L-amino acids, their D-enantiomers and selected amino acid derivatives such as 4-aminobutanoate/GABA. May be involved in the efflux from the lysosomal compartment of neutral amino acids resulting from proteolysis. May play a role in specifying sites for exocytosis in neurons. This chain is Proton-coupled amino acid transporter 1, found in Homo sapiens (Human).